Consider the following 444-residue polypeptide: Putative zinc metalloprotease XF_1047 (444 aa).

His22 contacts Zn(2+). The active site involves Glu23. His26 lines the Zn(2+) pocket. Residues 98 to 120 (IAIVAAGPLANLLLCMLLLWVLF) traverse the membrane as a helical segment. In terms of domain architecture, PDZ spans 192-276 (TLELSKLKQP…DGHPGMIEIR (85 aa)). Transmembrane regions (helical) follow at residues 371 to 393 (VGWFIYFLSLLSLSLAIINLFPI) and 418 to 440 (AMAAGQYIGLALLAGLMGLAFYN).

The protein belongs to the peptidase M50B family. Zn(2+) serves as cofactor.

Its subcellular location is the cell inner membrane. The sequence is that of Putative zinc metalloprotease XF_1047 from Xylella fastidiosa (strain 9a5c).